The following is a 196-amino-acid chain: ATP-dependent Clp protease proteolytic subunit (196 aa).

The active-site Nucleophile is Ser96. The active site involves His121.

Belongs to the peptidase S14 family. As to quaternary structure, fourteen ClpP subunits assemble into 2 heptameric rings which stack back to back to give a disk-like structure with a central cavity, resembling the structure of eukaryotic proteasomes.

Its subcellular location is the cytoplasm. The catalysed reaction is Hydrolysis of proteins to small peptides in the presence of ATP and magnesium. alpha-casein is the usual test substrate. In the absence of ATP, only oligopeptides shorter than five residues are hydrolyzed (such as succinyl-Leu-Tyr-|-NHMec, and Leu-Tyr-Leu-|-Tyr-Trp, in which cleavage of the -Tyr-|-Leu- and -Tyr-|-Trp bonds also occurs).. Functionally, cleaves peptides in various proteins in a process that requires ATP hydrolysis. Has a chymotrypsin-like activity. Plays a major role in the degradation of misfolded proteins. This is ATP-dependent Clp protease proteolytic subunit from Streptococcus salivarius.